The primary structure comprises 157 residues: 2-C-methyl-D-erythritol 2,4-cyclodiphosphate synthase (157 aa).

Residues Asp-8 and His-10 each contribute to the a divalent metal cation site. Residues Asp-8–His-10 and His-34–Ser-35 each bind 4-CDP-2-C-methyl-D-erythritol 2-phosphate. His-42 serves as a coordination point for a divalent metal cation. Residues Asp-56–Gly-58, Phe-61–Asp-65, Ala-100–Ala-106, Thr-132–Glu-135, Phe-139, and Arg-142 contribute to the 4-CDP-2-C-methyl-D-erythritol 2-phosphate site.

Belongs to the IspF family. Homotrimer. A divalent metal cation serves as cofactor.

It catalyses the reaction 4-CDP-2-C-methyl-D-erythritol 2-phosphate = 2-C-methyl-D-erythritol 2,4-cyclic diphosphate + CMP. The protein operates within isoprenoid biosynthesis; isopentenyl diphosphate biosynthesis via DXP pathway; isopentenyl diphosphate from 1-deoxy-D-xylulose 5-phosphate: step 4/6. Involved in the biosynthesis of isopentenyl diphosphate (IPP) and dimethylallyl diphosphate (DMAPP), two major building blocks of isoprenoid compounds. Catalyzes the conversion of 4-diphosphocytidyl-2-C-methyl-D-erythritol 2-phosphate (CDP-ME2P) to 2-C-methyl-D-erythritol 2,4-cyclodiphosphate (ME-CPP) with a corresponding release of cytidine 5-monophosphate (CMP). The sequence is that of 2-C-methyl-D-erythritol 2,4-cyclodiphosphate synthase from Ectopseudomonas mendocina (strain ymp) (Pseudomonas mendocina).